We begin with the raw amino-acid sequence, 128 residues long: Small ribosomal subunit protein uS14m (128 aa).

Belongs to the universal ribosomal protein uS14 family. As to quaternary structure, component of the mitochondrial ribosome small subunit (28S) which comprises a 12S rRNA and about 30 distinct proteins. Interacts with LIAT1.

It is found in the mitochondrion. The sequence is that of Small ribosomal subunit protein uS14m (MRPS14) from Bos taurus (Bovine).